Reading from the N-terminus, the 266-residue chain is Stomatin homolog PH1511 (266 aa).

Residues 7–27 traverse the membrane as a helical segment; the sequence is FFVTSIILLFILIFLASAIKI. 2 coiled-coil regions span residues 125-152 and 178-213; these read GQAH…EATD and RQAE…ISEH.

It belongs to the band 7/mec-2 family. Homotrimer. Interacts with PH1510 and is cleaved by PH1510.

It is found in the membrane. This chain is Stomatin homolog PH1511, found in Pyrococcus horikoshii (strain ATCC 700860 / DSM 12428 / JCM 9974 / NBRC 100139 / OT-3).